The following is a 211-amino-acid chain: Protein-methionine-sulfoxide reductase heme-binding subunit MsrQ (211 aa).

Transmembrane regions (helical) follow at residues 17 to 37 (LAGL…GLGA), 82 to 102 (LWCF…ELGV), 116 to 136 (PYLT…FTST), and 153 to 173 (FVYL…KIIS).

Belongs to the MsrQ family. In terms of assembly, heterodimer of a catalytic subunit (MsrP) and a heme-binding subunit (MsrQ). FMN is required as a cofactor. It depends on heme b as a cofactor.

It is found in the cell inner membrane. Part of the MsrPQ system that repairs oxidized periplasmic proteins containing methionine sulfoxide residues (Met-O), using respiratory chain electrons. Thus protects these proteins from oxidative-stress damage caused by reactive species of oxygen and chlorine generated by the host defense mechanisms. MsrPQ is essential for the maintenance of envelope integrity under bleach stress, rescuing a wide series of structurally unrelated periplasmic proteins from methionine oxidation, including the primary periplasmic chaperone SurA and the lipoprotein Pal. MsrQ provides electrons for reduction to the reductase catalytic subunit MsrP, using the quinone pool of the respiratory chain. The protein is Protein-methionine-sulfoxide reductase heme-binding subunit MsrQ of Shigella sonnei (strain Ss046).